The sequence spans 1259 residues: MANYLAQFQTIKNSCDRLVAAVEDVCDLWPTVKGLFEEHQPLKRAFLTNKTRNPVFVENLPVEFILTTDARLRSRFPQEQYLFWFREPYATIVLVTCEDLDEFKNILKPRLKLIVQNDEREWFIVFVSKAHPSNDQATKNVKKVYAKLEVDFSSKKRERCCKLDVHGPEGNFWEDLELKITECIRNTLDRRAQFYEDEIRKLSEQRFMPIWNFCNFFILKESLAFIFEMAHLHEDALREYDELELCYLETVNMPGKQRDFGGFDGEDDQAVLLKPGSKPLTQIVQDDSFREFEFRQYLFACQSRLLFKLNRPFEVASRGYSFVISFAKALTLHESVLPFCMREVWVITACLALIEATASHHHDGVVAPDIEKEFFRLQGDLYSLSRVKFMRLGYLIGYGTDIEKSPLNSACLSMLPWPKPAVWPSLPQDASSEVLEKEKTILQATSRTKHFGIQRKALPLEPSVLLRVANRRRASLSTGNIPEMFDGRPSFTEGSGLEASPRTPSSLKVQAPPMSRTNSSPGNFESPLDRPMRLAEIFVAAEHALRLTISDHDLLKTLSSIQDFENKYLNLTKGAAENYHRSWWKRHGVVLDGEIAAVCFKHGKYDLAANSYEKVCALYAGEGWQDLLAEVLPNLAQCQKILDDQAGYMSSCVRLLSLDKGLFSSKERQAFQSEVVTLAHSEMKNPVPLDVSSLITFSGNTGPPLQLCDGDPGNLSVTVWSGFPDDITLDSLSLTLVATNNTDEGGQALKSSAATVLNPGRNTITFALPPQKPGSYVLGVVTGQIGRLRFRSHSFSKGGPADSDDFMSYEKPTRPILKVSKPRALVDLAAAVSSALLINEAQWIGIIVRPIAYSLKGAILHIDTGPGLKIEDSYGIEMERYMDADCDTGASKAEVFVEDSPVSSKRDSEVLNLCDGKIVFSDWASNVSSILWVPVRALSEKLARGSSSVTPLKQDILEGMRTVALKLEFGVHHNQIFERTIAAHFTDPFDVTTRVANKCNDGTLVLQVMLHSLVKANLIVLDVWLDLQDGFIHGQNDGRPTSTFFPLVVSPGSRAAVVFSICLDKSMSSEGKDLQLPESILNIKYGIHGDRAAGAHRPVDADHSETDTEGRDLVFKSAIVLQRPVLDPCLTVGFLPLPSDGLRVGKLITMQWRVERLKELKESEAVEQQHDEVLYEVNANSENWMIAGRKRGHVSLSEEQGSRVVISILCVPLVAGYVRPPQLGLPNVEEANVSSNPSGPHLVCVLPPLLSSSYCLPVK.

Ala-2 carries the post-translational modification N-acetylalanine. Residues 479–526 (GNIPEMFDGRPSFTEGSGLEASPRTPSSLKVQAPPMSRTNSSPGNFES) form a disordered region.

This sequence belongs to the TMEM1 family. As to quaternary structure, part of the multisubunit TRAPP (transport protein particle) II complex composed of BET3, BET5, TRS20, TRS23, TRS31, TRS33, TRS65, TRS85, TRS120 and TRS130.

It is found in the golgi apparatus. The protein localises to the trans-Golgi network. The protein resides in the early endosome. Its function is as follows. Specific subunit of the TRAPP II complex, a highly conserved vesicle tethering complex that is required for the proper transport of proteins in post-Golgi trafficking pathways to the growing cell plate in mitotic active cells. Required for the polarized and selective transport of PIN2, but not PIN1, to the plasma membrane. Not required for ER-to-Golgi as well as biosynthetic and endocytic vacuolar transport. The chain is Trafficking protein particle complex II-specific subunit 130 homolog from Arabidopsis thaliana (Mouse-ear cress).